The following is a 247-amino-acid chain: 2,3-bisphosphoglycerate-dependent phosphoglycerate mutase (247 aa).

Substrate contacts are provided by residues R8–N15, T21–G22, R60, E87–Y90, K98, R114–R115, and G183–N184. H9 (tele-phosphohistidine intermediate) is an active-site residue. E87 serves as the catalytic Proton donor/acceptor.

Belongs to the phosphoglycerate mutase family. BPG-dependent PGAM subfamily.

The catalysed reaction is (2R)-2-phosphoglycerate = (2R)-3-phosphoglycerate. Its pathway is carbohydrate degradation; glycolysis; pyruvate from D-glyceraldehyde 3-phosphate: step 3/5. Functionally, catalyzes the interconversion of 2-phosphoglycerate and 3-phosphoglycerate. The protein is 2,3-bisphosphoglycerate-dependent phosphoglycerate mutase of Chlorobium limicola (strain DSM 245 / NBRC 103803 / 6330).